The sequence spans 483 residues: Matrix metalloproteinase-20 (483 aa).

The N-terminal stretch at 1-22 (MKVLPASGLAVFLIMALKFSTA) is a signal peptide. The propeptide occupies 23–107 (APSLVAASPR…PRCGVPDVAN (85 aa)). A Cysteine switch motif is present at residues 98–105 (PRCGVPDV). Cys-100 contributes to the Zn(2+) binding site. Ca(2+) is bound by residues Glu-164, Ala-165, and Asp-166. Zn(2+)-binding residues include His-176 and Asp-178. Residues Asp-183, Gly-184, Arg-186, and Thr-188 each coordinate Ca(2+). His-191 contacts Zn(2+). Glu-197, Gly-198, Gly-200, and Asp-202 together coordinate Ca(2+). His-204 contacts Zn(2+). Ca(2+) is bound by residues Asp-206 and Glu-209. His-226 provides a ligand contact to Zn(2+). Residue Glu-227 is part of the active site. His-230 and His-236 together coordinate Zn(2+). Hemopexin repeat units follow at residues 293–343 (PDLC…FPQL), 344–389 (MSNV…GFPR), 391–439 (VQQI…FSGV), and 440–483 (NGQI…WIGC). Cys-296 and Cys-483 are oxidised to a cystine.

Belongs to the peptidase M10A family. The cofactor is Zn(2+). It depends on Ca(2+) as a cofactor. Autoactivates at least at the 107-Asn-|-Tyr-108 site. As to expression, expressed specifically in the enamel organ.

It localises to the secreted. The protein localises to the extracellular space. It is found in the extracellular matrix. Functionally, degrades amelogenin, the major protein component of the enamel matrix and two of the macromolecules characterizing the cartilage extracellular matrix: aggrecan and the cartilage oligomeric matrix protein (COMP). May play a central role in tooth enamel formation. Cleaves aggrecan at the '360-Asn-|-Phe-361' site. The chain is Matrix metalloproteinase-20 (MMP20) from Homo sapiens (Human).